Here is a 192-residue protein sequence, read N- to C-terminus: uncharacterized protein (192 aa).

The Nudix hydrolase domain maps to 29–160 (HRQAAVLIPI…PLDIYRRGDS (132 aa)). The Nudix box signature appears at 67 to 89 (GAVDDTDTSVIAAALREAEEEVA). Mg(2+) is bound by residues Glu-83 and Glu-87.

The protein belongs to the Nudix hydrolase family. PCD1 subfamily. It depends on Mn(2+) as a cofactor. Mg(2+) is required as a cofactor.

Probably mediates the hydrolysis of some nucleoside diphosphate derivatives. This is an uncharacterized protein from Escherichia fergusonii (strain ATCC 35469 / DSM 13698 / CCUG 18766 / IAM 14443 / JCM 21226 / LMG 7866 / NBRC 102419 / NCTC 12128 / CDC 0568-73).